The sequence spans 678 residues: Protein MALE DISCOVERER 2 (678 aa).

An N-terminal signal peptide occupies residues 1–25; sequence MMGCGFHFPWFFFLIIGLQAPLSLS. The Extracellular portion of the chain corresponds to 26-323; sequence LTSQGSALLK…SKGSKHVWLY (298 aa). N-linked (GlcNAc...) asparagine glycosylation occurs at asparagine 52. LRR repeat units lie at residues 71 to 94, 95 to 117, 119 to 141, and 143 to 164; these read KVQI…SQLS, DLRS…YGSF, NLEV…LSNG, and SLKH…KIVR. Positions 247 to 314 are disordered; the sequence is LAAEPAPSAP…KNQPQDNKQS (68 aa). Residues 296-311 are compositionally biased toward polar residues; the sequence is KGSTSPDISKNQPQDN. Residues 324 to 344 traverse the membrane as a helical segment; the sequence is VVIAVASFVGLLIIVAVIFFC. Topologically, residues 345 to 678 are cytoplasmic; that stretch reads RKRAVKSIGP…ELEILSSEAT (334 aa). Residues 346 to 651 form the Protein kinase domain; that stretch reads KRAVKSIGPW…DVAEQLKQVI (306 aa).

It belongs to the protein kinase superfamily. Ser/Thr protein kinase family. In terms of tissue distribution, expressed in pollen tubes and seedlings.

Its subcellular location is the endomembrane system. The catalysed reaction is L-seryl-[protein] + ATP = O-phospho-L-seryl-[protein] + ADP + H(+). The enzyme catalyses L-threonyl-[protein] + ATP = O-phospho-L-threonyl-[protein] + ADP + H(+). Functionally, involved in the pollen tube perception of the female signal by binding an unidentified female attractant. May be involved in the regulation of root hairs development. The polypeptide is Protein MALE DISCOVERER 2 (MDIS2) (Arabidopsis thaliana (Mouse-ear cress)).